The chain runs to 417 residues: Secreted aspartic protease 4 (417 aa).

The N-terminal stretch at 1-18 (MFLQNILSVLAFALLIDA) is a signal peptide. Positions 19–75 (APVKRSTGFVTLDFNVKRSLVDPKDPTVEVKRSPLFLDIEPTEIPVDDTGRNDVGKR) are cleaved as a propeptide — activation peptide. In terms of domain architecture, Peptidase A1 spans 89-403 (YSADITIGSN…DLDDRKISMA (315 aa)). Residue Asp-107 is part of the active site. 107 to 109 (DTG) contacts pepstatin A. An intrachain disulfide couples Cys-122 to Cys-134. An N-linked (GlcNAc...) asparagine glycan is attached at Asn-137. 160-161 (AD) lines the pepstatin A pocket. Asp-267 contributes to the Zn(2+) binding site. Asp-293 is an active-site residue. Residue 293–297 (DSGTT) coordinates pepstatin A. Cysteines 331 and 369 form a disulfide.

It belongs to the peptidase A1 family. As to quaternary structure, monomer.

It is found in the secreted. It carries out the reaction Preferential cleavage at the carboxyl of hydrophobic amino acids, but fails to cleave 15-Leu-|-Tyr-16, 16-Tyr-|-Leu-17 and 24-Phe-|-Phe-25 of insulin B chain. Activates trypsinogen, and degrades keratin.. Activity is inhibited by squash aspartic peptidase inhibitor (SQAPI). Its function is as follows. Secreted aspartic peptidases (SAPs) are a group of ten acidic hydrolases considered as key virulence factors. These enzymes supply the fungus with nutrient amino acids as well as are able to degrade the selected host's proteins involved in the immune defense. Moreover, acts toward human hemoglobin though limited proteolysis to generate a variety of antimicrobial hemocidins, enabling to compete with the other microorganisms of the same physiological niche using the microbicidal peptides generated from the host protein. In terms of biological role, plays a key role in defense against host by cleaving histatin-5 (Hst 5), a peptide from human saliva that carries out fungicidal activity. The cleavage rate decreases in an order of SAP2 &gt; SAP9 &gt; SAP3 &gt; SAP7 &gt; SAP4 &gt; SAP1 &gt; SAP8. The first cleavage occurs between residues 'Lys-17' and 'His-18' of Hst 5, giving DSHAKRHHGYKRKFHEK and HHSHRGY peptides. Simultaneously, the DSHAKRHHGY and KRKFHEKHHSHRGY peptides are also formed. This Candida albicans (strain SC5314 / ATCC MYA-2876) (Yeast) protein is Secreted aspartic protease 4.